The chain runs to 314 residues: Serine/threonine-protein phosphatase PP-Y (314 aa).

Positions 60, 62, 88, and 120 each coordinate Mn(2+). Residue His-121 is the Proton donor of the active site. 2 residues coordinate Mn(2+): His-169 and His-244.

The protein belongs to the PPP phosphatase family. PP-Y subfamily. It depends on Mn(2+) as a cofactor.

The enzyme catalyses O-phospho-L-seryl-[protein] + H2O = L-seryl-[protein] + phosphate. It catalyses the reaction O-phospho-L-threonyl-[protein] + H2O = L-threonyl-[protein] + phosphate. The polypeptide is Serine/threonine-protein phosphatase PP-Y (PpY-55A) (Drosophila melanogaster (Fruit fly)).